The chain runs to 78 residues: Pigment-dispersing hormone peptides (78 aa).

Residues 1–22 form the signal peptide; the sequence is MRSAVIVTMLVVVALAALLTQG. A75 is subject to Alanine amide.

Belongs to the arthropod PDH family. In terms of tissue distribution, expressed in eyestalk tissue and cerebral ganglia.

The protein localises to the secreted. In terms of biological role, the pigment-dispersing hormone causes the migration of the distal retinal pigment into the proximal end of the pigment chromatophore cells and thus decreases the amount of light entering the retinulas. May also function as a neurotransmitter and/or neuromodulator. The sequence is that of Pigment-dispersing hormone peptides from Carcinus maenas (Common shore crab).